A 111-amino-acid polypeptide reads, in one-letter code: WAP four-disulfide core domain protein 12 (111 aa).

The first 23 residues, 1 to 23 (MGSSSFLVLMVSLVLVTLVAVEG), serve as a signal peptide directing secretion. One can recognise a WAP domain in the interval 27 to 74 (GIEKAGVCPADNVRCFKSDPPQCHTDQDCLGERKCCYLHCGFKCVIPV). Disulfide bonds link C34-C62, C41-C66, C49-C61, and C55-C70. The segment at 80-111 (GGNKDEDVSRPYPEPGWEAKCPGSSSTRCPQK) is disordered. Positions 102 to 111 (GSSSTRCPQK) are enriched in polar residues.

Highly expressed in prostate, skin, lung and esophagus. Weakly expressed in skeletal muscle, epididymis, kidney, trachea, salivary gland, testis and seminal vesicle.

The protein localises to the secreted. Its function is as follows. Antibacterial protein. Putative acid-stable proteinase inhibitor. The protein is WAP four-disulfide core domain protein 12 (WFDC12) of Homo sapiens (Human).